We begin with the raw amino-acid sequence, 243 residues long: Terpene cyclase penB (243 aa).

The next 3 membrane-spanning stretches (helical) occupy residues 19 to 39, 48 to 68, and 78 to 98; these read IANI…VGMI, YGMA…YSLI, and GVFI…IKFA. An N-linked (GlcNAc...) asparagine glycan is attached at Asn-111. A run of 4 helical transmembrane segments spans residues 112-132, 137-157, 172-194, and 205-225; these read LSLI…ALAA, SLAY…GGLC, LWLS…WMYW, and LVLW…LCYW.

This sequence belongs to the paxB family.

It is found in the membrane. Its pathway is secondary metabolite biosynthesis. Functionally, terpene cyclase; part of the gene cluster that mediates the biosynthesis of the indole diterpenes penitrems. The geranylgeranyl diphosphate (GGPP) synthase penG catalyzes the first step in penitrem biosynthesis via conversion of farnesyl pyrophosphate and isopentyl pyrophosphate into geranylgeranyl pyrophosphate (GGPP). Condensation of indole-3-glycerol phosphate with GGPP by the prenyl transferase penC then forms 3-geranylgeranylindole (3-GGI). Epoxidation by the FAD-dependent monooxygenase penM leads to a epoxidized-GGI that is substrate of the terpene cyclase penB for cyclization to yield paspaline. Paspaline is subsequently converted to 13-desoxypaxilline by the cytochrome P450 monooxygenase penP, the latter being then converted to paxilline by the cytochrome P450 monooxygenase penQ. Paxilline is converted to beta-paxitriol via C-10 ketoreduction by the short-chain dehydrogenase PC-15 which can be monoprenylated at the C-20 by the indole diterpene prenyltransferase penD. A two-step elimination (acetylation and elimination) process performed by the O-acetyltransferase PC-16 and the P.simplicissimum ptmI-ortholog not yet identified in P.crustosum, leads to the production of the prenylated form of penijanthine. The FAD-linked oxidoreductase ptmO then converts the prenylated form of penijanthine into PC-M5 which is in turn transformed into PC-M4 by the aromatic dimethylallyltransferase PC-22. A series of oxidation steps involving 4 cytochrome P450 monooxygenases (PC-21, PC-05, PC-23, PC-20) and a FAD-dependent monooxygenase (PC-14) are required for the transformation of PC-M4 to penitrems A and E. Synthesis of these final products is proposed to proceed via penitrems D and C (PC-21, PC-05, PC-14) and penitrems B and F (PC-21, PC-05, PC-14, PC-23). This Penicillium crustosum (Blue mold fungus) protein is Terpene cyclase penB (penB).